The primary structure comprises 509 residues: Solute carrier family 2, facilitated glucose transporter member 4 (509 aa).

At 1–24 (MPSGFQQIGSEDGEPPQQRVTGTL) the chain is on the cytoplasmic side. The interval 7–13 (QIGSEDG) is interaction with SRFBP1. Ser10 carries the phosphoserine modification. A helical transmembrane segment spans residues 25-45 (VLAVFSAVLGSLQFGYNIGVI). At 46–81 (NAPQKVIEQSYNETWLGRQGPEGPSSIPPGTLTTLW) the chain is on the extracellular side. An N-linked (GlcNAc...) asparagine glycan is attached at Asn57. Residues 82–102 (ALSVAIFSVGGMISSFLIGII) traverse the membrane as a helical segment. Topologically, residues 103 to 111 (SQWLGRKRA) are cytoplasmic. A helical membrane pass occupies residues 112–132 (MLVNNVLAVLGGSLMGLANAA). Residues 133 to 142 (ASYEMLILGR) are Extracellular-facing. Residues 143–163 (FLIGAYSGLTSGLVPMYVGEI) form a helical membrane-spanning segment. Topologically, residues 164–171 (APTHLRGA) are cytoplasmic. The chain crosses the membrane as a helical span at residues 172-192 (LGTLNQLAIVIGILIAQVLGL). Gln177 is a D-glucose binding site. Over 193-201 (ESLLGTASL) the chain is Extracellular. The chain crosses the membrane as a helical span at residues 202-222 (WPLLLGLTVLPALLQLVLLPF). Cys223 is lipidated: S-palmitoyl cysteine. At 223-287 (CPESPRYLYI…LLGSRTHRQP (65 aa)) the chain is on the cytoplasmic side. Ser274 is subject to Phosphoserine; by SGK1. Residues 288–308 (LIIAVVLQLSQQLSGINAVFY) form a helical membrane-spanning segment. D-glucose-binding positions include 298-299 (QQ) and Asn304. Over 309–323 (YSTSIFETAGVGQPA) the chain is Extracellular. A helical membrane pass occupies residues 324–344 (YATIGAGVVNTVFTLVSVLLV). D-glucose is bound at residue Asn333. The Cytoplasmic segment spans residues 345-353 (ERAGRRTLH). The helical transmembrane segment at 354-374 (LLGLAGMCGCAILMTVALLLL) threads the bilayer. Over 375 to 384 (ERVPAMSYVS) the chain is Extracellular. The helical transmembrane segment at 385–405 (IVAIFGFVAFFEIGPGPIPWF) threads the bilayer. 2 residues coordinate D-glucose: Glu396 and Trp404. Residues 406–417 (IVAELFSQGPRP) lie on the Cytoplasmic side of the membrane. A helical transmembrane segment spans residues 418-438 (AAMAVAGFSNWTSNFIIGMGF). Residues 439-445 (QYVAEAM) lie on the Extracellular side of the membrane. Residues 446 to 466 (GPYVFLLFAVLLLGFFIFTFL) form a helical membrane-spanning segment. The Cytoplasmic portion of the chain corresponds to 467-509 (RVPETRGRTFDQISAAFHRTPSLLEQEVKPSTELEYLGPDEND). The residue at position 486 (Thr486) is a Phosphothreonine. Ser488 carries the post-translational modification Phosphoserine. The Dileucine internalization motif signature appears at 489-490 (LL).

It belongs to the major facilitator superfamily. Sugar transporter (TC 2.A.1.1) family. Glucose transporter subfamily. Interacts with NDUFA9. Binds to DAXX. Interacts via its N-terminus with SRFBP1. Interacts with TRARG1; the interaction is required for proper SLC2A4 recycling after insulin stimulation. Sumoylated. Post-translationally, palmitoylated. Palmitoylation by ZDHHC7 controls the insulin-dependent translocation of GLUT4 to the plasma membrane. Skeletal and cardiac muscles; brown and white fat.

It is found in the cell membrane. The protein resides in the endomembrane system. The protein localises to the cytoplasm. Its subcellular location is the perinuclear region. The enzyme catalyses D-glucose(out) = D-glucose(in). Functionally, insulin-regulated facilitative glucose transporter, which plays a key role in removal of glucose from circulation. Response to insulin is regulated by its intracellular localization: in the absence of insulin, it is efficiently retained intracellularly within storage compartments in muscle and fat cells. Upon insulin stimulation, translocates from these compartments to the cell surface where it transports glucose from the extracellular milieu into the cell. This is Solute carrier family 2, facilitated glucose transporter member 4 from Homo sapiens (Human).